A 530-amino-acid chain; its full sequence is CTP synthase (530 aa).

The amidoligase domain stretch occupies residues 1–267 (MTKYVFVTGG…DDFVLNHFKM (267 aa)). Serine 13 lines the CTP pocket. Residue serine 13 coordinates UTP. 14–19 (SLGKGI) provides a ligand contact to ATP. An L-glutamine-binding site is contributed by tyrosine 54. An ATP-binding site is contributed by aspartate 71. The Mg(2+) site is built by aspartate 71 and glutamate 141. CTP-binding positions include 148–150 (DIE), 188–193 (KTKPTQ), and lysine 224. Residues 188–193 (KTKPTQ) and lysine 224 contribute to the UTP site. 240–242 (RDA) lines the ATP pocket. A Glutamine amidotransferase type-1 domain is found at 292 to 530 (KIALVGKYIE…LFKAFIGATM (239 aa)). Glycine 354 contacts L-glutamine. The active-site Nucleophile; for glutamine hydrolysis is the cysteine 381. L-glutamine-binding positions include 382-385 (LGMQ), glutamate 405, and arginine 463. Residues histidine 508 and glutamate 510 contribute to the active site.

The protein belongs to the CTP synthase family. Homotetramer.

It catalyses the reaction UTP + L-glutamine + ATP + H2O = CTP + L-glutamate + ADP + phosphate + 2 H(+). The catalysed reaction is L-glutamine + H2O = L-glutamate + NH4(+). It carries out the reaction UTP + NH4(+) + ATP = CTP + ADP + phosphate + 2 H(+). The protein operates within pyrimidine metabolism; CTP biosynthesis via de novo pathway; CTP from UDP: step 2/2. Allosterically activated by GTP, when glutamine is the substrate; GTP has no effect on the reaction when ammonia is the substrate. The allosteric effector GTP functions by stabilizing the protein conformation that binds the tetrahedral intermediate(s) formed during glutamine hydrolysis. Inhibited by the product CTP, via allosteric rather than competitive inhibition. Catalyzes the ATP-dependent amination of UTP to CTP with either L-glutamine or ammonia as the source of nitrogen. Regulates intracellular CTP levels through interactions with the four ribonucleotide triphosphates. The protein is CTP synthase of Latilactobacillus sakei subsp. sakei (strain 23K) (Lactobacillus sakei subsp. sakei).